A 660-amino-acid polypeptide reads, in one-letter code: MTSASKAVELQLQVKHNAEELQDFMRDLEHWEKDMKEKDLELRRQGGVAEENLPPIRNGNFRKKKKKGKAKESSRKTKEENTKNRIKSYDYDAWAKLDVDRILDELDKEDSTHDSLSQESESDEDGIRVDSQKALVLKEKGNKYFKQGKYDEAIECYTKGMDADPYNPVLPTNRASAYFRLKKFAVAESDCNLAIALSRTYTKAYARRGAARFALQKLEDARKDYEKVLELEPDNFEATNELRKINQALTSKENSGPGAAAAAESKPAAGESKPTGGQQGRQKAIAEKDLGNGFFKEGKYEQAIECYTRGIAADRTNALLPANRAMAYLKIQRYEEAERDCTQAIVLDGSYSKAFARRGTARTFLGKINEAKQDFETVLLLEPGNKQAATELSRIKKELIEKGHWDDVFLDSTQRHHVVKAVDNPPRGSPKALKKVFIEETGNLIETVDAPDSSATVPESDRATAAVGTGTKKNPSEGVSLPAGDRPRAKVLKIEAVSDTSAPQAQVGVKQDARQPGSEKASVRAEQMPGQLAAAGLPPVPANSFQLESDFRQLRSSPEMLYQYVKNIEPSLYPKLFQKNLDPDVFNQIIKILHDFYIEREKPALIFEVLERLSQLRRFDMAVMFMSGPERKLTNVLFNHLEKSDLKEDSVEELKKRYGG.

The residue at position 2 (Thr2) is an N-acetylthreonine. The stretch at 8-41 (VELQLQVKHNAEELQDFMRDLEHWEKDMKEKDLE) is one TPR 1 repeat. A disordered region spans residues 42 to 83 (LRRQGGVAEENLPPIRNGNFRKKKKKGKAKESSRKTKEENTK). The segment covering 60–69 (NFRKKKKKGK) has biased composition (basic residues). Residues 70–83 (AKESSRKTKEENTK) are compositionally biased toward basic and acidic residues. Residues Ser88, Ser117, Ser120, and Ser122 each carry the phosphoserine modification. The disordered stretch occupies residues 109–128 (EDSTHDSLSQESESDEDGIR). 3 TPR repeats span residues 134 to 167 (ALVL…DPYN), 169 to 201 (VLPT…SRTY), and 202 to 235 (TKAY…EPDN). The disordered stretch occupies residues 250–283 (TSKENSGPGAAAAAESKPAAGESKPTGGQQGRQK). The segment covering 252–273 (KENSGPGAAAAAESKPAAGESK) has biased composition (low complexity). TPR repeat units lie at residues 284 to 317 (AIAE…DRTN), 319 to 351 (LLPA…DGSY), and 352 to 385 (SKAF…EPGN). Residues 449–485 (DAPDSSATVPESDRATAAVGTGTKKNPSEGVSLPAGD) are disordered. A Phosphoserine modification is found at Ser476. Residue Lys493 forms a Glycyl lysine isopeptide (Lys-Gly) (interchain with G-Cter in SUMO2) linkage.

This sequence belongs to the RPAP3 family. In terms of assembly, tightly associated with the RNA polymerase II complex. Component of the R2TP complex composed at least of RUVBL1, RUVBL2, RPAP3 and PIHD1. Component of the PAQosome complex which is responsible for the biogenesis of several protein complexes and which consists of R2TP complex members RUVBL1, RUVBL2, RPAP3 and PIH1D1, URI complex members PFDN2, PFDN6, PDRG1, UXT and URI1 as well as ASDURF, POLR2E and DNAAF10/WDR92. Interacts with PIH1D1. Interacts with TSC1 and TSC2. Interacts with PRPF8 and EFTUD2 in a ZNHIT2-dependent manner.

Forms an interface between the RNA polymerase II enzyme and chaperone/scaffolding protein, suggesting that it is required to connect RNA polymerase II to regulators of protein complex formation. This Mus musculus (Mouse) protein is RNA polymerase II-associated protein 3 (Rpap3).